Reading from the N-terminus, the 307-residue chain is Replication termination factor 2 (307 aa).

Residues 193–296 form a disordered region; sequence AKLEKKTKKP…SSAKRSKEES (104 aa). Residues 227–241 are compositionally biased toward basic and acidic residues; sequence GKPEEADPDPREKKS. Residue Ser288 is modified to Phosphoserine.

It belongs to the rtf2 family. In terms of assembly, interacts with DDI2; probably also interacts with DDI1. Undergoes proteasomal degradation, via DDI1 and DDI2. Removal from stalled replisomes and degradation are required for genome stability.

The protein localises to the chromosome. Functionally, replication termination factor which is a component of the elongating replisome. Required for ATR pathway signaling upon DNA damage and has a positive activity during DNA replication. Might function to facilitate fork pausing at replication fork barriers like the rDNA. May be globally required to stimulate ATR signaling after the fork stalls or encounters a lesion. Interacts with nascent DNA. This chain is Replication termination factor 2, found in Mus musculus (Mouse).